Consider the following 446-residue polypeptide: Probable arogenate/prephenate dehydrogenase (446 aa).

The 283-residue stretch at 6–288 (LTISIIGGTD…SEAKRGAYYS (283 aa)) folds into the Prephenate/arogenate dehydrogenase domain.

This sequence in the N-terminal section; belongs to the prephenate/arogenate dehydrogenase family.

This is Probable arogenate/prephenate dehydrogenase from Methanocaldococcus jannaschii (strain ATCC 43067 / DSM 2661 / JAL-1 / JCM 10045 / NBRC 100440) (Methanococcus jannaschii).